We begin with the raw amino-acid sequence, 414 residues long: Esterase FrsA (414 aa).

It belongs to the FrsA family.

The enzyme catalyses a carboxylic ester + H2O = an alcohol + a carboxylate + H(+). In terms of biological role, catalyzes the hydrolysis of esters. This chain is Esterase FrsA, found in Shigella sonnei (strain Ss046).